Consider the following 224-residue polypeptide: Putative adhesin A1E_05320 (224 aa).

An N-terminal signal peptide occupies residues 1-22 (MKKLLLIAATSATMLSSTLSFA).

This chain is Putative adhesin A1E_05320, found in Rickettsia canadensis (strain McKiel).